A 340-amino-acid polypeptide reads, in one-letter code: Probable tRNA pseudouridine synthase B (340 aa).

D82 acts as the Nucleophile in catalysis. Positions L250–M325 constitute a PUA domain.

It belongs to the pseudouridine synthase TruB family. Type 2 subfamily.

The catalysed reaction is uridine(55) in tRNA = pseudouridine(55) in tRNA. In terms of biological role, could be responsible for synthesis of pseudouridine from uracil-55 in the psi GC loop of transfer RNAs. The chain is Probable tRNA pseudouridine synthase B from Pyrococcus furiosus (strain ATCC 43587 / DSM 3638 / JCM 8422 / Vc1).